The primary structure comprises 281 residues: Gas vesicle protein L1 (281 aa).

Belongs to the gas vesicle GvpF/GvpL family. May form oligomers. GvpF to GvpM interact with each other in vitro, and may form multi-subunit complex(es). Interacts with GvpC1, GvpN1 and GvpO1.

The protein resides in the gas vesicle. It localises to the cytoplasm. In terms of biological role, proteins GvpF to GvpM might be involved in nucleating gas vesicle formation. A minor component of the gas vesicle. This the only minor gas vesicle protein that binds all the others (including GvpC1, GvpN1 and GvpO1, but not GvpA1), suggesting it might be able to assemble them. Gas vesicles are hollow, gas filled proteinaceous nanostructures found in several microbial planktonic microorganisms. They allow positioning of halobacteria at the optimal depth for growth in the poorly aerated, shallow brine pools of their habitat. Functionally, expression of a 9.5 kb p-vac DNA fragment containing 2 divergently transcribed regions (gvpD-gvpE-gvpF-gvpG-gvpH-gvpI-gvpJ-gvpK-gvpL-gvpM and gvpA-gvpC-gvpN-gvpO) allows H.volcanii to produce gas vesicles. A minimal gas vesicle can be made in H.volcanii by gvpA1-gvpO1 plus gvpF1-gvpG1-gvpJ1-gvpK1-gvpL1-gvpM1; lack of enough GvpJ1 prevents their formation. A similar region restores gas vesicle production in H.halobium without the p-vac locus, but it still has the c-vac locus. This chain is Gas vesicle protein L1 (gvpL11), found in Halobacterium salinarum (strain ATCC 700922 / JCM 11081 / NRC-1) (Halobacterium halobium).